The sequence spans 104 residues: UPF0145 protein cbdbA1711 (104 aa).

The protein belongs to the UPF0145 family.

The polypeptide is UPF0145 protein cbdbA1711 (Dehalococcoides mccartyi (strain CBDB1)).